The sequence spans 310 residues: Quinolinate synthase (310 aa).

Iminosuccinate is bound by residues His-27 and Ser-44. Cys-89 is a binding site for [4Fe-4S] cluster. Residues 115-117 (YVN) and Ser-132 contribute to the iminosuccinate site. Cys-175 is a [4Fe-4S] cluster binding site. Iminosuccinate contacts are provided by residues 201 to 203 (HPE) and Thr-222. Cys-267 contacts [4Fe-4S] cluster.

It belongs to the quinolinate synthase family. Type 2 subfamily. It depends on [4Fe-4S] cluster as a cofactor.

Its subcellular location is the cytoplasm. It catalyses the reaction iminosuccinate + dihydroxyacetone phosphate = quinolinate + phosphate + 2 H2O + H(+). It functions in the pathway cofactor biosynthesis; NAD(+) biosynthesis; quinolinate from iminoaspartate: step 1/1. Functionally, catalyzes the condensation of iminoaspartate with dihydroxyacetone phosphate to form quinolinate. This chain is Quinolinate synthase, found in Thermus thermophilus (strain ATCC 27634 / DSM 579 / HB8).